The following is a 526-amino-acid chain: GMP synthase [glutamine-hydrolyzing] (526 aa).

Positions 14-208 (SILIVDFGSQ…VHDICGLAGD (195 aa)) constitute a Glutamine amidotransferase type-1 domain. The active-site Nucleophile is Cys-91. Residues His-182 and Glu-184 contribute to the active site. In terms of domain architecture, GMPS ATP-PPase spans 209-401 (WTMAEFRQTK…LGMPDVFVDR (193 aa)). 236–242 (SGGVDSS) contributes to the ATP binding site.

Homodimer.

The enzyme catalyses XMP + L-glutamine + ATP + H2O = GMP + L-glutamate + AMP + diphosphate + 2 H(+). Its pathway is purine metabolism; GMP biosynthesis; GMP from XMP (L-Gln route): step 1/1. Its function is as follows. Catalyzes the synthesis of GMP from XMP. This is GMP synthase [glutamine-hydrolyzing] from Zymomonas mobilis subsp. mobilis (strain ATCC 31821 / ZM4 / CP4).